A 424-amino-acid chain; its full sequence is CinA-like protein (424 aa).

This sequence belongs to the CinA family.

This is CinA-like protein from Prochlorococcus marinus (strain MIT 9312).